A 91-amino-acid polypeptide reads, in one-letter code: Acylphosphatase (91 aa).

The Acylphosphatase-like domain maps to 3–91; the sequence is TVTMKVTGLV…EKFTRFSVVY (89 aa). Residues Arg-18 and Asn-36 contribute to the active site.

The protein belongs to the acylphosphatase family.

It carries out the reaction an acyl phosphate + H2O = a carboxylate + phosphate + H(+). The sequence is that of Acylphosphatase (acyP) from Lactobacillus gasseri (strain ATCC 33323 / DSM 20243 / BCRC 14619 / CIP 102991 / JCM 1131 / KCTC 3163 / NCIMB 11718 / NCTC 13722 / AM63).